The primary structure comprises 582 residues: Transcription factor tau subunit sfc6 (582 aa).

Residues 1–97 form a disordered region; sequence MGPKSKEYEN…SAKKQSSKGL (97 aa). Acidic residues predominate over residues 18–39; the sequence is EDNDDDGDFVLENVMSEEDIEI. Residues 63-87 show a composition bias toward polar residues; it reads QPLTPSSSKGAGNEPKSQNSSTTRG. 3 WD repeats span residues 221–262, 268–314, and 326–369; these read TQFL…NFKS, HDWG…VKFH, and FNDS…ECPL.

Component of the TFIIIC complex including sfc1, sfc3, sfc4, sfc6 and sfc7. The subunits are organized in two globular domains, tauA and tauB, connected by a proteolysis-sensitive and flexible linker. Interacts with sfc1, sfc3 and sfc4.

It is found in the nucleus. In terms of biological role, TFIIIC mediates tRNA and 5S RNA gene activation by binding to intragenic promoter elements. Upstream of the transcription start site, TFIIIC assembles the initiation complex TFIIIB-TFIIIC-tDNA, which is sufficient for RNA polymerase III recruitment and function. Part of the tauB domain of TFIIIC that binds boxB DNA promoter sites of tRNA and similar genes. Cooperates with sfc3 in DNA binding. Localizes to chromatin insulator sequence without recruiting RNA polymerase III and plays a role in nuclear organization. The protein is Transcription factor tau subunit sfc6 of Schizosaccharomyces pombe (strain 972 / ATCC 24843) (Fission yeast).